Reading from the N-terminus, the 94-residue chain is Co-chaperonin GroES (94 aa).

It belongs to the GroES chaperonin family. As to quaternary structure, heptamer of 7 subunits arranged in a ring. Interacts with the chaperonin GroEL.

It localises to the cytoplasm. Functionally, together with the chaperonin GroEL, plays an essential role in assisting protein folding. The GroEL-GroES system forms a nano-cage that allows encapsulation of the non-native substrate proteins and provides a physical environment optimized to promote and accelerate protein folding. GroES binds to the apical surface of the GroEL ring, thereby capping the opening of the GroEL channel. The chain is Co-chaperonin GroES from Staphylococcus aureus (strain Mu50 / ATCC 700699).